A 347-amino-acid polypeptide reads, in one-letter code: Dihydroorotate dehydrogenase (quinone) (347 aa).

Residues 65-69 (AGLDK) and threonine 89 contribute to the FMN site. Lysine 69 contacts substrate. Substrate is bound at residue 114 to 118 (NRMGF). Positions 146 and 179 each coordinate FMN. Asparagine 179 is a binding site for substrate. The active-site Nucleophile is serine 182. Asparagine 184 contributes to the substrate binding site. FMN contacts are provided by lysine 224 and threonine 252. Residue 253–254 (NT) coordinates substrate. Residues glycine 275, glycine 304, and 325-326 (YT) contribute to the FMN site.

This sequence belongs to the dihydroorotate dehydrogenase family. Type 2 subfamily. As to quaternary structure, monomer. The cofactor is FMN.

It localises to the cell membrane. It carries out the reaction (S)-dihydroorotate + a quinone = orotate + a quinol. The protein operates within pyrimidine metabolism; UMP biosynthesis via de novo pathway; orotate from (S)-dihydroorotate (quinone route): step 1/1. Its function is as follows. Catalyzes the conversion of dihydroorotate to orotate with quinone as electron acceptor. In Herminiimonas arsenicoxydans, this protein is Dihydroorotate dehydrogenase (quinone).